The following is an 89-amino-acid chain: Small ribosomal subunit protein uS15 (89 aa).

The protein belongs to the universal ribosomal protein uS15 family. As to quaternary structure, part of the 30S ribosomal subunit. Forms a bridge to the 50S subunit in the 70S ribosome, contacting the 23S rRNA.

Its function is as follows. One of the primary rRNA binding proteins, it binds directly to 16S rRNA where it helps nucleate assembly of the platform of the 30S subunit by binding and bridging several RNA helices of the 16S rRNA. Forms an intersubunit bridge (bridge B4) with the 23S rRNA of the 50S subunit in the ribosome. The sequence is that of Small ribosomal subunit protein uS15 from Photobacterium profundum (strain SS9).